The primary structure comprises 243 residues: 7-cyano-7-deazaguanine synthase (243 aa).

14–24 lines the ATP pocket; the sequence is FSGGQDSATCL. Residues cysteine 202, cysteine 217, cysteine 220, and cysteine 223 each coordinate Zn(2+).

Belongs to the QueC family. Requires Zn(2+) as cofactor.

The enzyme catalyses 7-carboxy-7-deazaguanine + NH4(+) + ATP = 7-cyano-7-deazaguanine + ADP + phosphate + H2O + H(+). It participates in purine metabolism; 7-cyano-7-deazaguanine biosynthesis. Catalyzes the ATP-dependent conversion of 7-carboxy-7-deazaguanine (CDG) to 7-cyano-7-deazaguanine (preQ(0)). The polypeptide is 7-cyano-7-deazaguanine synthase (Paraburkholderia phymatum (strain DSM 17167 / CIP 108236 / LMG 21445 / STM815) (Burkholderia phymatum)).